Consider the following 209-residue polypeptide: MDLARQIAMELLDIQAVYLRPKQPFTWASGVKSPIYTDNRVTLSYPETRTLIENGFVKQIQEHFPNVDIIAGTATAGIPHGAIIADKMNLPFAYIRSKAKDHGVGNQIEGRVYSGQKMVIIEDLISTGGSVLEAVTAAQSQGIEVLGVVAIFTYQLAKAEQAFREANIPLVTLTDYNQLIKVAKVNGYITADQLVLLKKFKEDQMNWQS.

5-phospho-alpha-D-ribose 1-diphosphate-binding positions include Arg-96, Lys-100, His-102, and 122-130 (EDLISTGGS). Ser-126 is an orotate binding site.

Belongs to the purine/pyrimidine phosphoribosyltransferase family. PyrE subfamily. As to quaternary structure, homodimer. Requires Mg(2+) as cofactor.

It catalyses the reaction orotidine 5'-phosphate + diphosphate = orotate + 5-phospho-alpha-D-ribose 1-diphosphate. It functions in the pathway pyrimidine metabolism; UMP biosynthesis via de novo pathway; UMP from orotate: step 1/2. Functionally, catalyzes the transfer of a ribosyl phosphate group from 5-phosphoribose 1-diphosphate to orotate, leading to the formation of orotidine monophosphate (OMP). The protein is Orotate phosphoribosyltransferase of Streptococcus agalactiae serotype Ia (strain ATCC 27591 / A909 / CDC SS700).